The primary structure comprises 493 residues: GTPase Der (493 aa).

Residues 3-166 form the EngA-type G 1 domain; it reads PVIALVGRPN…EALGIFPKDN (164 aa). Residues 9 to 16, 56 to 60, and 118 to 121 each bind GTP; these read GRPNVGKS, DTGGI, and NKVD. The disordered stretch occupies residues 166-195; that stretch reads NAEEEGEGEPASEEVAEGEEPTRIPGPSEK. The span at 167–184 shows a compositional bias: acidic residues; that stretch reads AEEEGEGEPASEEVAEGE. The region spanning 198-371 is the EngA-type G 2 domain; it reads IKIAIIGRPN…SVQESFRSAV (174 aa). Residues 204–211, 251–255, and 316–319 contribute to the GTP site; these read GRPNVGKS, DTAGV, and NKWD. The KH-like domain occupies 372-456; that stretch reads TRWPTSRLTS…PIRIEYKGGE (85 aa). A compositionally biased stretch (basic and acidic residues) spans 454-463; the sequence is GGENPYEGKK. The disordered stretch occupies residues 454–493; that stretch reads GGENPYEGKKNSLTARQVNKKRRLMSHHKKAEKKKKDKRR. Residues 471–493 are compositionally biased toward basic residues; sequence VNKKRRLMSHHKKAEKKKKDKRR.

The protein belongs to the TRAFAC class TrmE-Era-EngA-EngB-Septin-like GTPase superfamily. EngA (Der) GTPase family. Associates with the 50S ribosomal subunit.

Functionally, GTPase that plays an essential role in the late steps of ribosome biogenesis. The sequence is that of GTPase Der from Pseudomonas aeruginosa (strain ATCC 15692 / DSM 22644 / CIP 104116 / JCM 14847 / LMG 12228 / 1C / PRS 101 / PAO1).